A 577-amino-acid polypeptide reads, in one-letter code: MFS-type transporter CPUR_05422 (577 aa).

A disordered region spans residues 1-49 (MSAMSAMGKPEHGSATTSDLEHRATESSLEKQDVEAAPPGPVKPVDPSP). Over residues 19-34 (DLEHRATESSLEKQDV) the composition is skewed to basic and acidic residues. The segment covering 38-47 (PPGPVKPVDP) has biased composition (pro residues). 14 consecutive transmembrane segments (helical) span residues 52 to 72 (STLK…LVAV), 93 to 113 (DVGW…LLFG), 123 to 143 (VVLL…GAAP), 157 to 177 (VGSA…IPLA), 184 to 204 (GLMG…GGAF), 212 to 232 (WCFY…FFYF), 249 to 269 (ILSL…CLLL), 285 to 305 (IIVL…VQIC), 326 to 346 (FLTT…IPIW), 359 to 379 (GIQL…GGLL), 383 to 403 (IGYY…GAGL), 416 to 436 (VIGY…TPNL), 449 to 469 (MGIA…VAVG), and 525 to 545 (VFIV…CMEW). A disordered region spans residues 554–577 (PPAGPPAGAPTESAPVETKAAGHT).

It belongs to the major facilitator superfamily. TCR/Tet family.

Its subcellular location is the membrane. In terms of biological role, MFS-type transporter; part of the ergochrome gene cluster responsible for the typical purple-black color of the ergot sclerotia. The ergochrome gene cluster produces several ergot pigments including the yellow ergochrome secalonic acid and its derivatives, as well as the red anthraquinones endocrocin and clavorubin. This Claviceps purpurea (strain 20.1) (Ergot fungus) protein is MFS-type transporter CPUR_05422.